Here is a 184-residue protein sequence, read N- to C-terminus: Trypsin/chymotrypsin inhibitor (184 aa).

2 disulfides stabilise this stretch: Cys39–Cys84 and Cys136–Cys147.

This sequence belongs to the protease inhibitor I3 (leguminous Kunitz-type inhibitor) family. Homodimer.

Inhibits trypsin and alpha-chymotrypsin. This is Trypsin/chymotrypsin inhibitor from Alocasia macrorrhizos (Giant taro).